The primary structure comprises 96 residues: Large ribosomal subunit protein uL23 (96 aa).

The protein belongs to the universal ribosomal protein uL23 family. As to quaternary structure, part of the 50S ribosomal subunit. Contacts protein L29, and trigger factor when it is bound to the ribosome.

Its function is as follows. One of the early assembly proteins it binds 23S rRNA. One of the proteins that surrounds the polypeptide exit tunnel on the outside of the ribosome. Forms the main docking site for trigger factor binding to the ribosome. The polypeptide is Large ribosomal subunit protein uL23 (Alkaliphilus oremlandii (strain OhILAs) (Clostridium oremlandii (strain OhILAs))).